We begin with the raw amino-acid sequence, 267 residues long: DNA repair protein RecO (267 aa).

It belongs to the RecO family.

In terms of biological role, involved in DNA repair and RecF pathway recombination. The sequence is that of DNA repair protein RecO from Prochlorococcus marinus (strain MIT 9313).